Here is a 259-residue protein sequence, read N- to C-terminus: 3-deoxy-manno-octulosonate cytidylyltransferase (259 aa).

This sequence belongs to the KdsB family.

Its subcellular location is the cytoplasm. It carries out the reaction 3-deoxy-alpha-D-manno-oct-2-ulosonate + CTP = CMP-3-deoxy-beta-D-manno-octulosonate + diphosphate. It participates in nucleotide-sugar biosynthesis; CMP-3-deoxy-D-manno-octulosonate biosynthesis; CMP-3-deoxy-D-manno-octulosonate from 3-deoxy-D-manno-octulosonate and CTP: step 1/1. The protein operates within bacterial outer membrane biogenesis; lipopolysaccharide biosynthesis. In terms of biological role, activates KDO (a required 8-carbon sugar) for incorporation into bacterial lipopolysaccharide in Gram-negative bacteria. This Maricaulis maris (strain MCS10) (Caulobacter maris) protein is 3-deoxy-manno-octulosonate cytidylyltransferase.